Consider the following 132-residue polypeptide: Small ribosomal subunit protein uS8 (132 aa).

Belongs to the universal ribosomal protein uS8 family. Part of the 30S ribosomal subunit. Contacts proteins S5 and S12.

In terms of biological role, one of the primary rRNA binding proteins, it binds directly to 16S rRNA central domain where it helps coordinate assembly of the platform of the 30S subunit. The protein is Small ribosomal subunit protein uS8 of Anaplasma marginale (strain Florida).